We begin with the raw amino-acid sequence, 119 residues long: Protein BEX4 (119 aa).

The interval 1 to 53 is disordered; that stretch reads MESKEELAANNLNGENAQQENEGREQAPTQNEETRHLGGGEGQKPGGNIRRGR. Low complexity predominate over residues 8–20; the sequence is AANNLNGENAQQE. Residues 31–89 form an interaction with SIRT2 region; that stretch reads NEETRHLGGGEGQKPGGNIRRGRVRRLVPNFRWAIPNRHIEHNEARDDVERFVGQMMEI. The interaction with alpha-tubulin stretch occupies residues 31-119; it reads NEETRHLGGG…DNHYDFCLIP (89 aa). Cys-116 is a binding site for Zn(2+).

It belongs to the BEX family. As to quaternary structure, interacts with alpha-tubulin. Interacts with SIRT2. Ubiquitinated and degraded by the proteasome.

It is found in the cytoplasm. The protein resides in the cytoskeleton. It localises to the spindle pole. Its subcellular location is the nucleus. In terms of biological role, may play a role in microtubule deacetylation by negatively regulating the SIRT2 deacetylase activity toward alpha-tubulin and thereby participate in the control of cell cycle progression and genomic stability. In absence of reductive stress, acts as a pseudosubstrate for the CRL2(FEM1B) complex: associates with FEM1B via zinc, thereby preventing association between FEM1B and its substrates. In Pongo abelii (Sumatran orangutan), this protein is Protein BEX4.